The chain runs to 401 residues: Nodal homolog 3-A (401 aa).

The first 18 residues, 1–18, serve as a signal peptide directing secretion; it reads MAFLNLFFCLVFISPLMA. Residues 19 to 274 constitute a propeptide that is removed on maturation; the sequence is MPPVLQGRKS…KVNGFRRLRR (256 aa). Residues Asn-168, Asn-337, Asn-341, and Asn-344 are each glycosylated (N-linked (GlcNAc...) asparagine). Intrachain disulfides connect Cys-299/Cys-365 and Cys-328/Cys-396.

It belongs to the TGF-beta family. In terms of assembly, monomer. The propeptide region interacts with bmp4 in a non-covalent manner. As to expression, expressed in the epithelial layer of the Spemann organizer during gastrulation.

Its subcellular location is the secreted. Its function is as follows. Exhibits mesoderm-dorsalizing activity and neural-inducing activity, but lacks mesoderm-inducing activity. Regulates the expression of specific mesodermal and neural genes. Induces convergent extension movements at the embryonic midline by activating the fgf signaling pathway to induce t/bra expression in the organizer region. Acts with wnt11 to induce Spemann organizer cells and induce axis formation. The unprocessed protein antagonizes bmp-signaling. The sequence is that of Nodal homolog 3-A (nodal3-a) from Xenopus laevis (African clawed frog).